The sequence spans 276 residues: 3-methyl-2-oxobutanoate hydroxymethyltransferase (276 aa).

Mg(2+)-binding residues include aspartate 45 and aspartate 84. 3-methyl-2-oxobutanoate is bound by residues 45-46 (DS), aspartate 84, and lysine 114. Glutamate 116 contributes to the Mg(2+) binding site. Glutamate 183 (proton acceptor) is an active-site residue.

This sequence belongs to the PanB family. Homodecamer; pentamer of dimers. Mg(2+) serves as cofactor.

It localises to the cytoplasm. The catalysed reaction is 3-methyl-2-oxobutanoate + (6R)-5,10-methylene-5,6,7,8-tetrahydrofolate + H2O = 2-dehydropantoate + (6S)-5,6,7,8-tetrahydrofolate. The protein operates within cofactor biosynthesis; (R)-pantothenate biosynthesis; (R)-pantoate from 3-methyl-2-oxobutanoate: step 1/2. Its function is as follows. Catalyzes the reversible reaction in which hydroxymethyl group from 5,10-methylenetetrahydrofolate is transferred onto alpha-ketoisovalerate to form ketopantoate. This chain is 3-methyl-2-oxobutanoate hydroxymethyltransferase, found in Syntrophomonas wolfei subsp. wolfei (strain DSM 2245B / Goettingen).